Reading from the N-terminus, the 422-residue chain is Probable Na(+)/H(+) antiporter 2 (422 aa).

The next 13 membrane-spanning stretches (helical) occupy residues 3 to 23 (IVLFLGYLSILFAGGAIIAKI), 28 to 48 (GIPDIPLLLIFGLILSILNVI), 52 to 72 (IVESSFDFIGNFGLIILLFIG), 93 to 113 (ILALLIVWIISGIVFNFVFHL), 119 to 139 (IGLLFGAIVSATDPATLIPIF), 157 to 177 (VFNDPLGIVVTLICLSALGLA), 183 to 203 (ILEFFSLAVGGIILGVIAGKF), 216 to 236 (YIAPFTLGLAIAFWYFAEGIF), 242 to 262 (YEISGFMAVAIMGLYIGNVIV), 281 to 301 (LSIFIRILIFVLLGASISIPL), 307 to 327 (LPAFLCALGSILLARPVGVLI), 341 to 361 (IYLALEGPRGVVPATLAAMVY), and 384 to 404 (LAGTILVATFMTIIVSVVLEA).

This sequence belongs to the monovalent cation:proton antiporter 1 (CPA1) transporter (TC 2.A.36) family.

It localises to the cell membrane. This is probably a Na(+)/H(+) antiporter. This is Probable Na(+)/H(+) antiporter 2 from Methanocaldococcus jannaschii (strain ATCC 43067 / DSM 2661 / JAL-1 / JCM 10045 / NBRC 100440) (Methanococcus jannaschii).